Here is a 364-residue protein sequence, read N- to C-terminus: Glycerol dehydrogenase (364 aa).

Asp37, Gly92, Lys93, Thr114, and Ser117 together coordinate NAD(+). Asp119 serves as a coordination point for glycerol. Positions 123, 125, and 129 each coordinate NAD(+). Residues Asp169, His252, and His269 each contribute to the glycerol site. Residues Asp169, His252, and His269 each coordinate Zn(2+).

This sequence belongs to the iron-containing alcohol dehydrogenase family. Requires Zn(2+) as cofactor.

The enzyme catalyses glycerol + NAD(+) = dihydroxyacetone + NADH + H(+). It functions in the pathway polyol metabolism; glycerol fermentation; glycerone phosphate from glycerol (oxidative route): step 1/2. Functionally, catalyzes the NAD-dependent oxidation of glycerol to dihydroxyacetone (glycerone). The polypeptide is Glycerol dehydrogenase (gldA) (Thermotoga maritima (strain ATCC 43589 / DSM 3109 / JCM 10099 / NBRC 100826 / MSB8)).